The following is a 310-amino-acid chain: Thioredoxin reductase (310 aa).

34–41 (NGIQPGGQ) is an FAD binding site. A disulfide bridge connects residues Cys-135 and Cys-138. 281 to 290 (DVQDKIYRQA) serves as a coordination point for FAD.

It belongs to the class-II pyridine nucleotide-disulfide oxidoreductase family. In terms of assembly, homodimer. It depends on FAD as a cofactor.

The protein resides in the cytoplasm. The enzyme catalyses [thioredoxin]-dithiol + NADP(+) = [thioredoxin]-disulfide + NADPH + H(+). The protein is Thioredoxin reductase (trxB) of Rickettsia bellii (strain RML369-C).